A 140-amino-acid polypeptide reads, in one-letter code: Ig heavy chain V region 93G7 (140 aa).

The signal sequence occupies residues 1 to 19; the sequence is MGWSFIFLFLLSVTAGVHS. An Ig-like domain is found at 20–139; sequence EVQLQQSGAE…WGQGTPLTVS (120 aa).

The chain is Ig heavy chain V region 93G7 from Mus musculus (Mouse).